Reading from the N-terminus, the 197-residue chain is FMN-dependent NADH:quinone oxidoreductase (197 aa).

FMN contacts are provided by residues serine 10 and serine 17–serine 19.

It belongs to the azoreductase type 1 family. As to quaternary structure, homodimer. FMN is required as a cofactor.

The enzyme catalyses 2 a quinone + NADH + H(+) = 2 a 1,4-benzosemiquinone + NAD(+). It catalyses the reaction N,N-dimethyl-1,4-phenylenediamine + anthranilate + 2 NAD(+) = 2-(4-dimethylaminophenyl)diazenylbenzoate + 2 NADH + 2 H(+). Its function is as follows. Quinone reductase that provides resistance to thiol-specific stress caused by electrophilic quinones. Also exhibits azoreductase activity. Catalyzes the reductive cleavage of the azo bond in aromatic azo compounds to the corresponding amines. The polypeptide is FMN-dependent NADH:quinone oxidoreductase (Mycoplasmoides gallisepticum (strain R(low / passage 15 / clone 2)) (Mycoplasma gallisepticum)).